A 327-amino-acid chain; its full sequence is ATP-dependent 6-phosphofructokinase (327 aa).

ATP-binding positions include glycine 12, 73 to 74, and 103 to 106; these read RL and GDGS. Aspartate 104 serves as a coordination point for Mg(2+). 126 to 128 is a binding site for substrate; it reads TID. Aspartate 128 acts as the Proton acceptor in catalysis. Arginine 155 serves as a coordination point for ADP. Substrate contacts are provided by residues arginine 163 and 170–172; that span reads MGH. ADP contacts are provided by residues 186–188 and 214–216; these read GAD and KRS. Substrate contacts are provided by residues glutamate 223, arginine 245, and 251-254; that span reads HTQR.

This sequence belongs to the phosphofructokinase type A (PFKA) family. ATP-dependent PFK group I subfamily. Prokaryotic clade 'B1' sub-subfamily. As to quaternary structure, homotetramer. Mg(2+) is required as a cofactor.

Its subcellular location is the cytoplasm. The catalysed reaction is beta-D-fructose 6-phosphate + ATP = beta-D-fructose 1,6-bisphosphate + ADP + H(+). It participates in carbohydrate degradation; glycolysis; D-glyceraldehyde 3-phosphate and glycerone phosphate from D-glucose: step 3/4. With respect to regulation, allosterically activated by ADP and other diphosphonucleosides, and allosterically inhibited by phosphoenolpyruvate. Functionally, catalyzes the phosphorylation of D-fructose 6-phosphate to fructose 1,6-bisphosphate by ATP, the first committing step of glycolysis. The chain is ATP-dependent 6-phosphofructokinase from Spiroplasma citri.